A 242-amino-acid chain; its full sequence is Proteasome subunit beta type-4 (242 aa).

Positions 1-23 are excised as a propeptide; the sequence is ESVARGTAPGELHCFPGAGPVRH. T24 functions as the Nucleophile in the catalytic mechanism.

This sequence belongs to the peptidase T1B family. The 26S proteasome consists of a 20S proteasome core and two 19S regulatory subunits. The 20S proteasome core is composed of 28 subunits that are arranged in four stacked rings, resulting in a barrel-shaped structure. The two end rings are each formed by seven alpha subunits, and the two central rings are each formed by seven beta subunits. The catalytic chamber with the active sites is on the inside of the barrel.

It localises to the cytoplasm. The protein resides in the nucleus. Non-catalytic component of the proteasome, a multicatalytic proteinase complex which is characterized by its ability to cleave peptides with Arg, Phe, Tyr, Leu, and Glu adjacent to the leaving group at neutral or slightly basic pH. The proteasome has an ATP-dependent proteolytic activity. This is Proteasome subunit beta type-4 (psmb4) from Xenopus laevis (African clawed frog).